The sequence spans 364 residues: DNA replication and repair protein RecF (364 aa).

30-37 (GNNGMGKT) lines the ATP pocket.

The protein belongs to the RecF family.

It is found in the cytoplasm. Its function is as follows. The RecF protein is involved in DNA metabolism; it is required for DNA replication and normal SOS inducibility. RecF binds preferentially to single-stranded, linear DNA. It also seems to bind ATP. The chain is DNA replication and repair protein RecF from Porphyromonas gingivalis (strain ATCC 33277 / DSM 20709 / CIP 103683 / JCM 12257 / NCTC 11834 / 2561).